A 177-amino-acid chain; its full sequence is Isopentenyl-diphosphate Delta-isomerase 2 (177 aa).

2 residues coordinate Mn(2+): H24 and H30. In terms of domain architecture, Nudix hydrolase spans 28-160; sequence MLHRAFSIFV…PDVYTVWFKK (133 aa). Residue C65 is part of the active site. Position 65 (C65) interacts with Mg(2+). Residue H67 coordinates Mn(2+). E85 provides a ligand contact to Mg(2+). Mn(2+) is bound by residues E110 and E112. Residue E112 is part of the active site.

It belongs to the IPP isomerase type 1 family. Homodimer. The cofactor is Mg(2+). Requires Mn(2+) as cofactor.

It localises to the cytoplasm. It catalyses the reaction isopentenyl diphosphate = dimethylallyl diphosphate. Its pathway is isoprenoid biosynthesis; dimethylallyl diphosphate biosynthesis; dimethylallyl diphosphate from isopentenyl diphosphate: step 1/1. In terms of biological role, catalyzes the 1,3-allylic rearrangement of the homoallylic substrate isopentenyl (IPP) to its highly electrophilic allylic isomer, dimethylallyl diphosphate (DMAPP). The sequence is that of Isopentenyl-diphosphate Delta-isomerase 2 from Photorhabdus laumondii subsp. laumondii (strain DSM 15139 / CIP 105565 / TT01) (Photorhabdus luminescens subsp. laumondii).